The following is a 183-amino-acid chain: Threonylcarbamoyl-AMP synthase (183 aa).

The 183-residue stretch at 1 to 183 (MNIQQIVEQL…LFTHQLFRQG (183 aa)) folds into the YrdC-like domain.

The protein belongs to the SUA5 family. TsaC subfamily.

Its subcellular location is the cytoplasm. The catalysed reaction is L-threonine + hydrogencarbonate + ATP = L-threonylcarbamoyladenylate + diphosphate + H2O. Functionally, required for the formation of a threonylcarbamoyl group on adenosine at position 37 (t(6)A37) in tRNAs that read codons beginning with adenine. Catalyzes the conversion of L-threonine, HCO(3)(-)/CO(2) and ATP to give threonylcarbamoyl-AMP (TC-AMP) as the acyladenylate intermediate, with the release of diphosphate. The polypeptide is Threonylcarbamoyl-AMP synthase (Pasteurella multocida (strain Pm70)).